We begin with the raw amino-acid sequence, 361 residues long: Ribosomal RNA large subunit methyltransferase M (361 aa).

S-adenosyl-L-methionine-binding positions include Ser187, 220–223 (CPGG), Asp239, Asp259, and Asp276. Catalysis depends on Lys305, which acts as the Proton acceptor.

It belongs to the class I-like SAM-binding methyltransferase superfamily. RNA methyltransferase RlmE family. RlmM subfamily. In terms of assembly, monomer.

It localises to the cytoplasm. It carries out the reaction cytidine(2498) in 23S rRNA + S-adenosyl-L-methionine = 2'-O-methylcytidine(2498) in 23S rRNA + S-adenosyl-L-homocysteine + H(+). Catalyzes the 2'-O-methylation at nucleotide C2498 in 23S rRNA. This chain is Ribosomal RNA large subunit methyltransferase M, found in Shewanella baltica (strain OS223).